Consider the following 294-residue polypeptide: 4-hydroxy-tetrahydrodipicolinate synthase (294 aa).

Threonine 47 is a pyruvate binding site. Tyrosine 135 functions as the Proton donor/acceptor in the catalytic mechanism. Lysine 163 functions as the Schiff-base intermediate with substrate in the catalytic mechanism. Valine 205 contacts pyruvate.

It belongs to the DapA family. In terms of assembly, homotetramer; dimer of dimers.

It is found in the cytoplasm. It catalyses the reaction L-aspartate 4-semialdehyde + pyruvate = (2S,4S)-4-hydroxy-2,3,4,5-tetrahydrodipicolinate + H2O + H(+). It participates in amino-acid biosynthesis; L-lysine biosynthesis via DAP pathway; (S)-tetrahydrodipicolinate from L-aspartate: step 3/4. Its function is as follows. Catalyzes the condensation of (S)-aspartate-beta-semialdehyde [(S)-ASA] and pyruvate to 4-hydroxy-tetrahydrodipicolinate (HTPA). This chain is 4-hydroxy-tetrahydrodipicolinate synthase, found in Rickettsia bellii (strain OSU 85-389).